The primary structure comprises 119 residues: NADH-quinone oxidoreductase subunit A (119 aa).

Transmembrane regions (helical) follow at residues 9-29, 63-83, and 88-108; these read VLLF…LGYV, LVAI…PWAV, and VGVT…VGFA.

This sequence belongs to the complex I subunit 3 family. In terms of assembly, NDH-1 is composed of 14 different subunits. Subunits NuoA, H, J, K, L, M, N constitute the membrane sector of the complex.

The protein resides in the cell inner membrane. The catalysed reaction is a quinone + NADH + 5 H(+)(in) = a quinol + NAD(+) + 4 H(+)(out). Its function is as follows. NDH-1 shuttles electrons from NADH, via FMN and iron-sulfur (Fe-S) centers, to quinones in the respiratory chain. The immediate electron acceptor for the enzyme in this species is believed to be ubiquinone. Couples the redox reaction to proton translocation (for every two electrons transferred, four hydrogen ions are translocated across the cytoplasmic membrane), and thus conserves the redox energy in a proton gradient. The sequence is that of NADH-quinone oxidoreductase subunit A from Acidovorax sp. (strain JS42).